Consider the following 227-residue polypeptide: Enolase-phosphatase E1 (227 aa).

Residues aspartate 11 and glutamate 13 each coordinate Mg(2+). Substrate-binding positions include serine 118–serine 119 and lysine 161. Residue aspartate 186 coordinates Mg(2+).

This sequence belongs to the HAD-like hydrolase superfamily. MasA/MtnC family. As to quaternary structure, monomer. Requires Mg(2+) as cofactor.

It localises to the cytoplasm. Its subcellular location is the nucleus. It carries out the reaction 5-methylsulfanyl-2,3-dioxopentyl phosphate + H2O = 1,2-dihydroxy-5-(methylsulfanyl)pent-1-en-3-one + phosphate. It functions in the pathway amino-acid biosynthesis; L-methionine biosynthesis via salvage pathway; L-methionine from S-methyl-5-thio-alpha-D-ribose 1-phosphate: step 3/6. The protein operates within amino-acid biosynthesis; L-methionine biosynthesis via salvage pathway; L-methionine from S-methyl-5-thio-alpha-D-ribose 1-phosphate: step 4/6. In terms of biological role, bifunctional enzyme that catalyzes the enolization of 2,3-diketo-5-methylthiopentyl-1-phosphate (DK-MTP-1-P) into the intermediate 2-hydroxy-3-keto-5-methylthiopentenyl-1-phosphate (HK-MTPenyl-1-P), which is then dephosphorylated to form the acireductone 1,2-dihydroxy-3-keto-5-methylthiopentene (DHK-MTPene). The sequence is that of Enolase-phosphatase E1 from Saccharomyces cerevisiae (strain RM11-1a) (Baker's yeast).